We begin with the raw amino-acid sequence, 380 residues long: Rab9 effector protein with kelch motifs (380 aa).

6 Kelch repeats span residues 57 to 103 (KIFI…FLPS), 108 to 154 (SIWV…TSSA), 159 to 211 (QLYV…AAGT), 212 to 258 (KLFI…AAVA), 262 to 311 (HVYM…VIPW), and 357 to 380 (LCFV…TVVD).

In terms of assembly, interacts with PIKFYVE; the interaction recruits RABEPK to the endosomal membrane. Interacts with RAB9 in its GTP-bound conformation. In terms of processing, phosphorylated on Ser residues by PIKFYVE.

The protein resides in the cytoplasm. The protein localises to the endosome membrane. Rab9 effector required for endosome to trans-Golgi network (TGN) transport. This is Rab9 effector protein with kelch motifs from Mus musculus (Mouse).